A 525-amino-acid chain; its full sequence is uncharacterized protein (525 aa).

An N-terminal signal peptide occupies residues 1–21 (MLECLSALLVLFAGGGGSVLA). The Extracellular portion of the chain corresponds to 22–448 (AVQSKTVADP…ISAASQLDKR (427 aa)). The tract at residues 242–264 (KVSSENCSKDTDDKSGSKKERNT) is disordered. The chain crosses the membrane as a helical span at residues 449-469 (IFIFTAITVSITTLMMLGFSY). Topologically, residues 470–525 (RSRVSFRDHSIDDSDDDNDWSDDEVEFDEEYFYSLPVSIPEKGISLDKMAQQLGVE) are cytoplasmic.

It localises to the membrane. This is an uncharacterized protein from Saccharomyces cerevisiae (strain ATCC 204508 / S288c) (Baker's yeast).